Consider the following 135-residue polypeptide: Large ribosomal subunit protein uL16 (135 aa).

This sequence belongs to the universal ribosomal protein uL16 family. As to quaternary structure, part of the 50S ribosomal subunit.

Functionally, binds 23S rRNA and is also seen to make contacts with the A and possibly P site tRNAs. The chain is Large ribosomal subunit protein uL16 from Coprothermobacter proteolyticus (strain ATCC 35245 / DSM 5265 / OCM 4 / BT).